A 330-amino-acid polypeptide reads, in one-letter code: RNA polymerase sigma factor RpoS (330 aa).

The tract at residues 56–89 (DATQLYLGEIGYSPLLTAEEEVYFARRALRGDVA) is sigma-70 factor domain-1. The sigma-70 factor domain-2 stretch occupies residues 94 to 164 (MIESNLRLVV…ERAIMNQTRT (71 aa)). An Interaction with polymerase core subunit RpoC motif is present at residues 118–121 (DLIE). The tract at residues 174-249 (ELNVYLRTAR…DEKENGPEDT (76 aa)) is sigma-70 factor domain-3. The interval 262–315 (WLFELNAKQREVLARRFGLLGYEAATLEDVGREIGLTRERVRQIQVEGLRRLRE) is sigma-70 factor domain-4. Positions 288–307 (LEDVGREIGLTRERVRQIQV) form a DNA-binding region, H-T-H motif.

This sequence belongs to the sigma-70 factor family. RpoS subfamily. In terms of assembly, interacts with the RNA polymerase core enzyme.

It is found in the cytoplasm. Sigma factors are initiation factors that promote the attachment of RNA polymerase to specific initiation sites and are then released. This sigma factor is the master transcriptional regulator of the stationary phase and the general stress response. The chain is RNA polymerase sigma factor RpoS from Shigella flexneri.